Consider the following 217-residue polypeptide: Snake venom metalloproteinase lebetase-4 (217 aa).

Positions 1–14 are excised as a propeptide; the sequence is SCRKKASQLNLTPE. Residue Q15 is modified to Pyrrolidone carboxylic acid. The 197-residue stretch at 21-217 folds into the Peptidase M12B domain; that stretch reads RYIELVIVAD…HNPQCILNQP (197 aa). Ca(2+) is bound by residues E24 and D108. 3 disulfide bridges follow: C132/C212, C172/C196, and C174/C179. H157 is a binding site for Zn(2+). E158 is a catalytic residue. Zn(2+)-binding residues include H161 and H167. Positions 212 and 215 each coordinate Ca(2+).

The protein belongs to the venom metalloproteinase (M12B) family. P-I subfamily. Monomer. It depends on Zn(2+) as a cofactor. Expressed by the venom gland.

It localises to the secreted. With respect to regulation, fibrinolytic and caseinolytic activities are inhibited by Cd(2+), Cu(2+) and Co(2+) ions. Not inhibited by Mg(2+), Ca(2+) and Ba(2+). Also inhibited by EDTA, EGTA and 1,10-phenanthroline. Functionally, snake venom zinc metalloprotease that hydrolyzes the Aalpha-chain and more slowly the Bbeta-chain of fibrin and fibrinogen. Also hydrolyzes casein and B-chain of oxidized insulin. Its fibrinolytic activity is direct, without any plasminogen activation. Inhibits ADP-induced and collagen-induced platelet aggregation. Shows low hemorrhagic activity. Cleaves the plasma proteinase inhibitors alpha(2)-macroglobulin (A2M) and alpha(2)M-related pregnancy zone protein (PZP), and is inhibited by them. This chain is Snake venom metalloproteinase lebetase-4, found in Macrovipera lebetinus (Levantine viper).